The chain runs to 121 residues: Small ribosomal subunit protein bS6 (121 aa).

The disordered stretch occupies residues 96–121 (DTGPSSMMKTVEREDARKTQQAEYQA). A compositionally biased stretch (basic and acidic residues) spans 105-115 (TVEREDARKTQ).

It belongs to the bacterial ribosomal protein bS6 family.

Functionally, binds together with bS18 to 16S ribosomal RNA. The polypeptide is Small ribosomal subunit protein bS6 (Albidiferax ferrireducens (strain ATCC BAA-621 / DSM 15236 / T118) (Rhodoferax ferrireducens)).